Consider the following 580-residue polypeptide: Keratin, type II cytoskeletal 5 (580 aa).

The interval 1–161 is head; it reads MSRQSSVSFR…DPTIQRVRTE (161 aa). A phosphoserine mark is found at Ser5, Ser8, Ser16, and Ser21. Thr24 carries the phosphothreonine; by CDK1 modification. 8 positions are modified to phosphoserine: Ser26, Ser36, Ser47, Ser61, Ser68, Ser72, Ser75, and Ser79. A Phosphothreonine; by CDK1 modification is found at Thr145. A Phosphothreonine; by AURKB modification is found at Thr160. A coil 1A region spans residues 162–197; it reads EREQIKTLNNKFASFIDKVRFLEQQNKVLDTKWALL. The IF rod domain maps to 162–475; it reads EREQIKTLNN…KLLEGEECRL (314 aa). The segment at 198–216 is linker 1; sequence QEQGTKTIKQNLDPLFEQY. The tract at residues 217–309 is coil 1B; it reads INNLRRQLDG…FFDAELSQMQ (93 aa). Residues 310 to 332 form a linker 12 region; the sequence is THVSDTSVVLSMDNNRSLDLDSI. Residues 333 to 471 are coil 2; that stretch reads IAEVKAQYED…ATYRKLLEGE (139 aa). The tract at residues 472 to 580 is tail; the sequence is ECRLSGEGVG…TSSSRRSFKS (109 aa). Arg526 carries the post-translational modification Omega-N-methylarginine. The tract at residues 555–580 is disordered; that stretch reads FGSGGGSGSSVKFVSTTSSSRRSFKS. The segment covering 563–580 has biased composition (low complexity); sequence SSVKFVSTTSSSRRSFKS.

It belongs to the intermediate filament family. As to quaternary structure, heterodimer of a type I and a type II keratin. Heterodimer with type I keratin KRT25 leading to the formation of keratin intermediate filament (KIF) network. Forms a heterodimer (via 2B domains) with KRT14 (via 2B domains). Interacts with PLEC isoform 1C, when in a heterodimer with KRT14. Interacts with TCHP. Interacts with EPPK1. Interacts with AMELX. Interacts with PKP1 (via N-terminus) and PKP2. Phosphorylated by CDK1, AURKB and Rho-kinase, phosphorylation is regulated by the cell cycle. Thr-24 phosphorylation, mediated by CDK1, peaks during prometaphase or metaphase cells with phosphorylated filamentous structures evident throughout the cytoplasm during early mitosis. CDK1 phosphorylates Thr-24 in mitotic cells at the site of injury. Post-translationally, O-glycosylated. Expressed in the corneal epithelium (at protein level). Expressed in the epidermis of the ear (at protein level). Expressed in the basal and spinous layers of the skin at birth (at protein level).

It localises to the cytoplasm. Required for the formation of keratin intermediate filaments in the basal epidermis and maintenance of the skin barrier in response to mechanical stress. Regulates the recruitment of Langerhans cells to the epidermis, potentially by modulation of the abundance of macrophage chemotactic cytokines, macrophage inflammatory cytokines and CTNND1 localization in keratinocytes. The protein is Keratin, type II cytoskeletal 5 of Mus musculus (Mouse).